The following is a 473-amino-acid chain: Phosphatidylserine synthase 1 (473 aa).

An N-acetylalanine modification is found at alanine 2. The Cytoplasmic segment spans residues alanine 2–aspartate 35. The helical transmembrane segment at phenylalanine 36–phenylalanine 56 threads the bilayer. Topologically, residues alanine 57–glycine 72 are lumenal. A helical transmembrane segment spans residues isoleucine 73–phenylalanine 93. At threonine 94–arginine 102 the chain is on the cytoplasmic side. A helical membrane pass occupies residues methionine 103–phenylalanine 123. Residues glutamate 124 to tyrosine 186 lie on the Lumenal side of the membrane. Residues glycine 187–leucine 207 form a helical membrane-spanning segment. The Cytoplasmic portion of the chain corresponds to proline 208–aspartate 216. A helical transmembrane segment spans residues glutamine 217–cysteine 237. Topologically, residues arginine 238–arginine 286 are lumenal. The helical transmembrane segment at valine 287–leucine 307 threads the bilayer. Residues lysine 308 to leucine 319 lie on the Cytoplasmic side of the membrane. A helical membrane pass occupies residues serine 320–leucine 342. Topologically, residues threonine 343–tryptophan 355 are lumenal. A helical membrane pass occupies residues valine 356–phenylalanine 376. The Cytoplasmic segment spans residues serine 377 to tyrosine 383. A helical membrane pass occupies residues valine 384–tryptophan 404. Topologically, residues tyrosine 405–lysine 473 are lumenal. Serine 417, serine 425, serine 442, and serine 454 each carry phosphoserine. The disordered stretch occupies residues tryptophan 430–lysine 473. Over residues serine 455–serine 464 the composition is skewed to basic residues.

The protein belongs to the phosphatidyl serine synthase family.

The protein resides in the endoplasmic reticulum membrane. The catalysed reaction is a 1,2-diacyl-sn-glycero-3-phosphoethanolamine + L-serine = a 1,2-diacyl-sn-glycero-3-phospho-L-serine + ethanolamine. The enzyme catalyses a 1,2-diacyl-sn-glycero-3-phosphocholine + L-serine = a 1,2-diacyl-sn-glycero-3-phospho-L-serine + choline. It functions in the pathway phospholipid metabolism; phosphatidylserine biosynthesis. In terms of biological role, catalyzes a base-exchange reaction in which the polar head group of phosphatidylethanolamine (PE) or phosphatidylcholine (PC) is replaced by L-serine. Catalyzes mainly the conversion of phosphatidylcholine but also converts, in vitro and to a lesser extent, phosphatidylethanolamine. The chain is Phosphatidylserine synthase 1 (Ptdss1) from Rattus norvegicus (Rat).